A 725-amino-acid polypeptide reads, in one-letter code: Protein ALEX (725 aa).

Disordered regions lie at residues 1–93 (MSPS…ARAQ), 177–226 (GAIA…PLTD), 256–340 (EPPL…PSQP), 396–481 (PILT…SPLL), 508–528 (PMQV…PLGH), 584–624 (LPGL…AASS), and 638–675 (ATRS…GRPR). Over residues 41-51 (HLRRKPCHSRH) the composition is skewed to basic residues. The segment covering 260–276 (GSTTTPLSIWTAPQSQV) has biased composition (polar residues). Composition is skewed to basic and acidic residues over residues 297 to 307 (QLSEKQPRWKE) and 314 to 326 (RWKE…REGT). Pro residues-rich tracts occupy residues 423 to 442 (PSQP…PGQP) and 459 to 473 (RSLP…PRSP). Composition is skewed to low complexity over residues 584 to 598 (LPGL…AAAG) and 643 to 658 (ATQS…EAAS).

This sequence belongs to the ALEX family. In terms of assembly, interacts with the N-terminal region of the XLas isoforms of guanine nucleotide-binding protein G(s) subunit alpha.

The protein localises to the cell membrane. It localises to the cell projection. The protein resides in the ruffle. Its function is as follows. May inhibit the adenylyl cyclase-stimulating activity of guanine nucleotide-binding protein G(s) subunit alpha which is produced from the same locus in a different open reading frame. The chain is Protein ALEX from Mus musculus (Mouse).